The primary structure comprises 187 residues: Threonylcarbamoyl-AMP synthase (187 aa).

In terms of domain architecture, YrdC-like spans N4–N187. The interval G168 to N187 is disordered.

The protein belongs to the SUA5 family. TsaC subfamily.

It localises to the cytoplasm. It carries out the reaction L-threonine + hydrogencarbonate + ATP = L-threonylcarbamoyladenylate + diphosphate + H2O. Functionally, required for the formation of a threonylcarbamoyl group on adenosine at position 37 (t(6)A37) in tRNAs that read codons beginning with adenine. Catalyzes the conversion of L-threonine, HCO(3)(-)/CO(2) and ATP to give threonylcarbamoyl-AMP (TC-AMP) as the acyladenylate intermediate, with the release of diphosphate. This is Threonylcarbamoyl-AMP synthase from Pseudoalteromonas atlantica (strain T6c / ATCC BAA-1087).